Here is a 162-residue protein sequence, read N- to C-terminus: FCS-Like Zinc finger 6 (162 aa).

2 disordered regions span residues 25–47 (NLPSESEPSNQQKPTVASPYGSN) and 121–162 (RQEQ…AAAV). A compositionally biased stretch (polar residues) spans 27–47 (PSESEPSNQQKPTVASPYGSN). The segment at 88–132 (HFLRSCALCERLLVPGRDIYMYRGDKAFCSSECRQEQMAQDERKE) adopts an FLZ-type zinc-finger fold. Over residues 147–162 (APARAKPGKGRAAAAV) the composition is skewed to low complexity.

Belongs to the FLZ family. Interacts with KIN10 and KIN11 via its FLZ-type zinc finger domain. Early expressed in hypocotyl and cotyledon. Later expressed in old or senescing leaves and in pistil, pollen and filament of open flowers.

It is found in the nucleus. Its subcellular location is the cytoplasm. The protein resides in the endoplasmic reticulum. In terms of biological role, may act as an adapter to facilitate the interaction of SnRK1 complex with effector proteins, conferring tissue- and stimulus-type specific differences in the SnRK1 regulation pathway. Negatively regulates KIN10 leading to a repression of the SnRK1 signaling pathway. The polypeptide is FCS-Like Zinc finger 6 (Arabidopsis thaliana (Mouse-ear cress)).